We begin with the raw amino-acid sequence, 1074 residues long: Carbamoyl phosphate synthase large chain (1074 aa).

The carboxyphosphate synthetic domain stretch occupies residues 1–399 (MPKRSDIKKV…ALMKAIRSLD (399 aa)). Residues Arg129, Arg169, Gly175, Gly176, Glu208, Val210, Glu215, Gly241, Ile242, His243, Gln284, and Glu296 each contribute to the ATP site. The region spanning 133–325 (KKAMERIGEP…IARVTAKIAI (193 aa)) is the ATP-grasp 1 domain. Mg(2+)-binding residues include Gln284, Glu296, and Asn298. Mn(2+) contacts are provided by Gln284, Glu296, and Asn298. An oligomerization domain region spans residues 400–543 (IDIDLGYNGK…YSTYDEECEL (144 aa)). A carbamoyl phosphate synthetic domain region spans residues 544–933 (NPSDNKKVLI…FKAEMSAENN (390 aa)). The ATP-grasp 2 domain maps to 674–865 (NKLLNKLGIP…LAKIAAKVMA (192 aa)). ATP contacts are provided by Arg710, Asp749, Leu751, Glu756, Gly781, Ile782, His783, Ser784, Gln824, and Glu836. Mg(2+)-binding residues include Gln824, Glu836, and Asn838. Residues Gln824, Glu836, and Asn838 each contribute to the Mn(2+) site. The 143-residue stretch at 932 to 1074 (NNLPLDGIVF…YHREVRYRAL (143 aa)) folds into the MGS-like domain. Residues 934 to 1074 (LPLDGIVFIS…YHREVRYRAL (141 aa)) form an allosteric domain region.

It belongs to the CarB family. Composed of two chains; the small (or glutamine) chain promotes the hydrolysis of glutamine to ammonia, which is used by the large (or ammonia) chain to synthesize carbamoyl phosphate. Tetramer of heterodimers (alpha,beta)4. The cofactor is Mg(2+). Mn(2+) serves as cofactor.

It catalyses the reaction hydrogencarbonate + L-glutamine + 2 ATP + H2O = carbamoyl phosphate + L-glutamate + 2 ADP + phosphate + 2 H(+). It carries out the reaction hydrogencarbonate + NH4(+) + 2 ATP = carbamoyl phosphate + 2 ADP + phosphate + 2 H(+). It participates in amino-acid biosynthesis; L-arginine biosynthesis; carbamoyl phosphate from bicarbonate: step 1/1. It functions in the pathway pyrimidine metabolism; UMP biosynthesis via de novo pathway; (S)-dihydroorotate from bicarbonate: step 1/3. Large subunit of the glutamine-dependent carbamoyl phosphate synthetase (CPSase). CPSase catalyzes the formation of carbamoyl phosphate from the ammonia moiety of glutamine, carbonate, and phosphate donated by ATP, constituting the first step of 2 biosynthetic pathways, one leading to arginine and/or urea and the other to pyrimidine nucleotides. The large subunit (synthetase) binds the substrates ammonia (free or transferred from glutamine from the small subunit), hydrogencarbonate and ATP and carries out an ATP-coupled ligase reaction, activating hydrogencarbonate by forming carboxy phosphate which reacts with ammonia to form carbamoyl phosphate. The polypeptide is Carbamoyl phosphate synthase large chain (Methanothrix thermoacetophila (strain DSM 6194 / JCM 14653 / NBRC 101360 / PT) (Methanosaeta thermophila)).